The sequence spans 607 residues: Elongation factor 4 (607 aa).

The 183-residue stretch at 11-193 (KKIRNFSIIA…QIVELVPPPT (183 aa)) folds into the tr-type G domain. Residues 23–28 (DHGKST) and 140–143 (NKID) contribute to the GTP site.

It belongs to the TRAFAC class translation factor GTPase superfamily. Classic translation factor GTPase family. LepA subfamily.

It is found in the cell membrane. It carries out the reaction GTP + H2O = GDP + phosphate + H(+). In terms of biological role, required for accurate and efficient protein synthesis under certain stress conditions. May act as a fidelity factor of the translation reaction, by catalyzing a one-codon backward translocation of tRNAs on improperly translocated ribosomes. Back-translocation proceeds from a post-translocation (POST) complex to a pre-translocation (PRE) complex, thus giving elongation factor G a second chance to translocate the tRNAs correctly. Binds to ribosomes in a GTP-dependent manner. This is Elongation factor 4 from Exiguobacterium sp. (strain ATCC BAA-1283 / AT1b).